A 200-amino-acid polypeptide reads, in one-letter code: Recombination protein RecR (200 aa).

Residues 57-72 (CRQCRTLTEQELCPQC) form a C4-type zinc finger. Residues 80–175 (TQLCVVEGPV…TATRIAHGVP (96 aa)) form the Toprim domain.

It belongs to the RecR family.

Functionally, may play a role in DNA repair. It seems to be involved in an RecBC-independent recombinational process of DNA repair. It may act with RecF and RecO. The polypeptide is Recombination protein RecR (Pseudomonas entomophila (strain L48)).